The primary structure comprises 534 residues: Pentatricopeptide repeat-containing protein At2g20540 (534 aa).

PPR repeat units follow at residues 41–71 (SSFM…VSNP), 72–106 (NVFL…SFEL), 108–142 (DRFT…GPRF), 143–173 (HVVT…MYER), 174–208 (DVIS…TIVS), 209–239 (WTAM…GIEP), 240–274 (DEIS…GFLK), 275–305 (QTGV…MEGK), 306–340 (DVIS…KVKP), 341–371 (NGIT…MRQD), and 377–407 (KIEH…MPMK). The interval 412–487 (IWGSLLSSCR…TPGGSLIEVN (76 aa)) is type E motif. Residues 488 to 518 (NIVQEFVSGDNSKPFWTEISIVLQLFTSHQD) are type E(+) motif.

Belongs to the PPR family. PCMP-E subfamily.

The protein is Pentatricopeptide repeat-containing protein At2g20540 (PCMP-E78) of Arabidopsis thaliana (Mouse-ear cress).